The chain runs to 265 residues: 5'-nucleotidase SurE (265 aa).

Asp-8, Asp-9, Ser-40, and Asn-98 together coordinate a divalent metal cation.

This sequence belongs to the SurE nucleotidase family. Requires a divalent metal cation as cofactor.

The protein resides in the cytoplasm. The catalysed reaction is a ribonucleoside 5'-phosphate + H2O = a ribonucleoside + phosphate. Its function is as follows. Nucleotidase that shows phosphatase activity on nucleoside 5'-monophosphates. The chain is 5'-nucleotidase SurE from Trichormus variabilis (strain ATCC 29413 / PCC 7937) (Anabaena variabilis).